A 369-amino-acid polypeptide reads, in one-letter code: MFCVTPPELETKMNITKGGLVLFSANSNSSCMELSKKIAERLGVEMGKVQVYQEPNRETRVQIQESVRGKDVFIIQTISKDVNTTIMELLIMVYACKTSCAKSIIGVIPYFPYSKQCKMRKRGSIVSKLLASMMCKAGLTHLITMDLHQKEIQGFFNIPVDNLRASPFLLQYIQEEIPDYRNAVIVAKSPASAKRAQSFAERLRLGIAVIHGEAQDAESDLVDGRHSPPMVRSVAAIHPSLEIPMLIPKEKPPITVVGDVGGRIAIIVDDIIDDVDSFLAAAETLKERGAYKIFVMATHGLLSSDAPRLIEESAIDEVVVTNTIPHEVQKLQCPKIKTVDISMILSEAIRRIHNGESMSYLFRNIGLDD.

An N-acetylmethionine modification is found at M1. Phosphothreonine is present on T5. 3 positions are modified to phosphoserine: S219, S227, and S233.

It belongs to the ribose-phosphate pyrophosphokinase family. In terms of assembly, binds to PRPS1 and PRPS2.

Functionally, seems to play a negative regulatory role in 5-phosphoribose 1-diphosphate synthesis. This chain is Phosphoribosyl pyrophosphate synthase-associated protein 2 (PRPSAP2), found in Pongo abelii (Sumatran orangutan).